A 163-amino-acid polypeptide reads, in one-letter code: Phosphopantetheine adenylyltransferase (163 aa).

Thr-10 lines the substrate pocket. ATP-binding positions include 10 to 11 (TF) and His-18. 3 residues coordinate substrate: Lys-42, Leu-74, and Arg-88. ATP contacts are provided by residues 89-91 (GLR), Glu-99, and 124-130 (NSFISST).

It belongs to the bacterial CoaD family. Homohexamer. Mg(2+) serves as cofactor.

The protein resides in the cytoplasm. It carries out the reaction (R)-4'-phosphopantetheine + ATP + H(+) = 3'-dephospho-CoA + diphosphate. Its pathway is cofactor biosynthesis; coenzyme A biosynthesis; CoA from (R)-pantothenate: step 4/5. Functionally, reversibly transfers an adenylyl group from ATP to 4'-phosphopantetheine, yielding dephospho-CoA (dPCoA) and pyrophosphate. This is Phosphopantetheine adenylyltransferase from Shewanella sp. (strain MR-4).